The following is a 403-amino-acid chain: Nucleoporin nup44 (403 aa).

2 stretches are compositionally biased toward polar residues: residues 1-31 (MAFS…TTKP) and 67-124 (FGKT…DETN). The disordered stretch occupies residues 1–124 (MAFSFGQQGS…NPTKPVDETN (124 aa)).

The protein localises to the cytoplasm. Its subcellular location is the nucleus. Its function is as follows. Functions as a component of the nuclear pore complex (NPC). NPC components, collectively referred to as nucleoporins (NUPs), can play the role of both NPC structural components and of docking or interaction partners for transiently associated nuclear transport factors. Active directional transport is assured by both, a Phe-Gly (FG) repeat affinity gradient for these transport factors across the NPC and a transport cofactor concentration gradient across the nuclear envelope. The chain is Nucleoporin nup44 (nup44) from Schizosaccharomyces pombe (strain 972 / ATCC 24843) (Fission yeast).